Consider the following 302-residue polypeptide: MQALLNEILDAVRPLIGQGKVADYIPALGTVPANQLGIAVYGNDGEMYCAGDAETPFSVQSISKVFSLVQAIEHSGEAIWERLGHEPSGQPFNSLVQLEFERGRPRNPFINAGALVICDINQSRFAAPALSMRDFVRRLSGNPQVMVDGKVADSEYQHRARNAAMAYLMQSFGNFHNDVEAVLRSYFSHCALRMNCIDLARAFCFLANDGFCKHSGEQILTRRQTQQVNSIMATSGLYDEAGNFAYRVGLPGKSGVGGGIVAVVPGQFTVCVWSPELNTAGNSLAGMAALEMLSSRIGWSVF.

The substrate site is built by Ser61, Asn111, Glu155, Asn162, Tyr186, Tyr238, and Val256.

This sequence belongs to the glutaminase family. In terms of assembly, homotetramer.

It catalyses the reaction L-glutamine + H2O = L-glutamate + NH4(+). The chain is Glutaminase from Pseudomonas fluorescens (strain Pf0-1).